The sequence spans 352 residues: uncharacterized protein (352 aa).

Residues 1-21 (MNVDSRVFRFFLVFLILVVVA) form the signal peptide.

This sequence belongs to the bacterial solute-binding protein 1 family. WtpA subfamily.

This is an uncharacterized protein from Methanosarcina acetivorans (strain ATCC 35395 / DSM 2834 / JCM 12185 / C2A).